Reading from the N-terminus, the 130-residue chain is Small ribosomal subunit protein uS11c (130 aa).

This sequence belongs to the universal ribosomal protein uS11 family. In terms of assembly, part of the 30S ribosomal subunit.

Its subcellular location is the plastid. It localises to the chloroplast. The sequence is that of Small ribosomal subunit protein uS11c from Psilotum nudum (Whisk fern).